A 156-amino-acid chain; its full sequence is 6,7-dimethyl-8-ribityllumazine synthase (156 aa).

Residues phenylalanine 23, alanine 57–glutamate 59, and alanine 81–isoleucine 83 contribute to the 5-amino-6-(D-ribitylamino)uracil site. Serine 86–threonine 87 serves as a coordination point for (2S)-2-hydroxy-3-oxobutyl phosphate. The active-site Proton donor is the histidine 89. Phenylalanine 114 is a binding site for 5-amino-6-(D-ribitylamino)uracil. Position 128 (arginine 128) interacts with (2S)-2-hydroxy-3-oxobutyl phosphate.

It belongs to the DMRL synthase family.

It carries out the reaction (2S)-2-hydroxy-3-oxobutyl phosphate + 5-amino-6-(D-ribitylamino)uracil = 6,7-dimethyl-8-(1-D-ribityl)lumazine + phosphate + 2 H2O + H(+). It functions in the pathway cofactor biosynthesis; riboflavin biosynthesis; riboflavin from 2-hydroxy-3-oxobutyl phosphate and 5-amino-6-(D-ribitylamino)uracil: step 1/2. Catalyzes the formation of 6,7-dimethyl-8-ribityllumazine by condensation of 5-amino-6-(D-ribitylamino)uracil with 3,4-dihydroxy-2-butanone 4-phosphate. This is the penultimate step in the biosynthesis of riboflavin. The chain is 6,7-dimethyl-8-ribityllumazine synthase from Wolinella succinogenes (strain ATCC 29543 / DSM 1740 / CCUG 13145 / JCM 31913 / LMG 7466 / NCTC 11488 / FDC 602W) (Vibrio succinogenes).